The primary structure comprises 450 residues: MAVQAPEVDKLSLNEESVAKAPTKGSAAQGTAGDEDAENEESDEDDDQGVAEGAVATGDKKKRKRKPKKKKKKGVAKVQSNPPRVPLSTLFPNSQYPEGDIVEYKDDNAYRTTNEEKRHLDRMNNDFLSDYRQAAEIHRQVRQYAQKELIKPGRSLTEIAEGIEDSVRALTGHMGLEEGDSLVAGMGFPTGLNINHCAAHYSPNAGNKMVLQHGDVMKVDFGVHVNGRIVDSAFTVAFDPVYDNLLEAVKDATNTGIREAGIDVRMSDIGAAIQEAMESYEVELNGTTYPVKAIRNLNGHTIGHYLIHGGSTGKSVPIVKGGDQTKMEEGETYAIETFGSTGKGYVRDDMEVSHYARVPDAPNVPLRLSSAKNLLNVITKNFGTLPFCRRYLDRLGQDKYLLGLNNLVSSGLVDAYPPLVDVKGSYTAQFEHTILLRPNVKEVITRGDDY.

The interval 1–99 (MAVQAPEVDK…LFPNSQYPEG (99 aa)) is disordered. The span at 33–49 (GDEDAENEESDEDDDQG) shows a compositional bias: acidic residues. Positions 60–75 (KKKRKRKPKKKKKKGV) are enriched in basic residues. Substrate is bound at residue H200. The a divalent metal cation site is built by D220, D231, and H300. H308 contributes to the substrate binding site. E336 and E431 together coordinate a divalent metal cation.

This sequence belongs to the peptidase M24A family. Methionine aminopeptidase eukaryotic type 2 subfamily. Co(2+) serves as cofactor. Requires Zn(2+) as cofactor. Mn(2+) is required as a cofactor. It depends on Fe(2+) as a cofactor.

The protein localises to the cytoplasm. It catalyses the reaction Release of N-terminal amino acids, preferentially methionine, from peptides and arylamides.. Functionally, cotranslationally removes the N-terminal methionine from nascent proteins. The N-terminal methionine is often cleaved when the second residue in the primary sequence is small and uncharged (Met-Ala-, Cys, Gly, Pro, Ser, Thr, or Val). The polypeptide is Methionine aminopeptidase 2 (Uncinocarpus reesii (strain UAMH 1704)).